The chain runs to 514 residues: 2-isopropylmalate synthase (514 aa).

In terms of domain architecture, Pyruvate carboxyltransferase spans Ile8–Phe270. Positions 17, 205, 207, and 241 each coordinate Mn(2+). Residues Arg394 to Ile514 are regulatory domain.

This sequence belongs to the alpha-IPM synthase/homocitrate synthase family. LeuA type 1 subfamily. In terms of assembly, homodimer. Mn(2+) serves as cofactor.

The protein localises to the cytoplasm. It catalyses the reaction 3-methyl-2-oxobutanoate + acetyl-CoA + H2O = (2S)-2-isopropylmalate + CoA + H(+). It participates in amino-acid biosynthesis; L-leucine biosynthesis; L-leucine from 3-methyl-2-oxobutanoate: step 1/4. In terms of biological role, catalyzes the condensation of the acetyl group of acetyl-CoA with 3-methyl-2-oxobutanoate (2-ketoisovalerate) to form 3-carboxy-3-hydroxy-4-methylpentanoate (2-isopropylmalate). The sequence is that of 2-isopropylmalate synthase from Nitratidesulfovibrio vulgaris (strain DSM 19637 / Miyazaki F) (Desulfovibrio vulgaris).